A 428-amino-acid polypeptide reads, in one-letter code: Cytochrome P450-terp (428 aa).

Cysteine 377 lines the heme pocket.

This sequence belongs to the cytochrome P450 family. The cofactor is heme.

It is found in the cytoplasm. Functionally, catalyzes the hydroxylation of alpha-terpineol. The chain is Cytochrome P450-terp (cyp108) from Pseudomonas sp.